Reading from the N-terminus, the 815-residue chain is Leucine--tRNA ligase (815 aa).

The 'HIGH' region motif lies at 40–50; it reads PYPSGRIHMGH. The 'KMSKS' region signature appears at 583–587; sequence KMSKS. ATP is bound at residue Lys-586.

It belongs to the class-I aminoacyl-tRNA synthetase family.

The protein localises to the cytoplasm. The catalysed reaction is tRNA(Leu) + L-leucine + ATP = L-leucyl-tRNA(Leu) + AMP + diphosphate. The protein is Leucine--tRNA ligase of Nitratiruptor sp. (strain SB155-2).